The sequence spans 99 residues: NADH-quinone oxidoreductase subunit K (99 aa).

Helical transmembrane passes span 3–23 (PDNY…GVLL), 28–48 (IVVF…FVAF), and 59–79 (VVAF…LAII).

It belongs to the complex I subunit 4L family. NDH-1 is composed of 14 different subunits. Subunits NuoA, H, J, K, L, M, N constitute the membrane sector of the complex.

Its subcellular location is the cell membrane. The enzyme catalyses a quinone + NADH + 5 H(+)(in) = a quinol + NAD(+) + 4 H(+)(out). Functionally, NDH-1 shuttles electrons from NADH, via FMN and iron-sulfur (Fe-S) centers, to quinones in the respiratory chain. The immediate electron acceptor for the enzyme in this species is believed to be a menaquinone. Couples the redox reaction to proton translocation (for every two electrons transferred, four hydrogen ions are translocated across the cytoplasmic membrane), and thus conserves the redox energy in a proton gradient. This Mycobacterium sp. (strain JLS) protein is NADH-quinone oxidoreductase subunit K.